The following is a 53-amino-acid chain: UPF0391 membrane protein PSEEN0090 (53 aa).

2 helical membrane-spanning segments follow: residues 4–24 (WAIT…GGIA) and 29–49 (GIAK…FFFG).

The protein belongs to the UPF0391 family.

Its subcellular location is the cell membrane. The polypeptide is UPF0391 membrane protein PSEEN0090 (Pseudomonas entomophila (strain L48)).